A 313-amino-acid chain; its full sequence is Porphobilinogen deaminase (313 aa).

S-(dipyrrolylmethanemethyl)cysteine is present on C242.

This sequence belongs to the HMBS family. In terms of assembly, monomer. Dipyrromethane serves as cofactor.

It catalyses the reaction 4 porphobilinogen + H2O = hydroxymethylbilane + 4 NH4(+). The protein operates within porphyrin-containing compound metabolism; protoporphyrin-IX biosynthesis; coproporphyrinogen-III from 5-aminolevulinate: step 2/4. Its function is as follows. Tetrapolymerization of the monopyrrole PBG into the hydroxymethylbilane pre-uroporphyrinogen in several discrete steps. This is Porphobilinogen deaminase from Pseudomonas putida (strain ATCC 700007 / DSM 6899 / JCM 31910 / BCRC 17059 / LMG 24140 / F1).